A 209-amino-acid chain; its full sequence is Translation initiation factor 2 subunit beta (209 aa).

Residues 144–202 (TIEEGKEYVVEITEVGSSGEGRTNYKGYTIFVPGAKRGETVKVRIKKVKNDVAIGEIIE) enclose the TRAM domain.

This sequence belongs to the eIF-2-beta/eIF-5 family. As to quaternary structure, heterotrimer composed of an alpha, a beta and a gamma chain.

In terms of biological role, eIF-2 functions in the early steps of protein synthesis by forming a ternary complex with GTP and initiator tRNA. In Thermoplasma acidophilum (strain ATCC 25905 / DSM 1728 / JCM 9062 / NBRC 15155 / AMRC-C165), this protein is Translation initiation factor 2 subunit beta (eif2b).